The following is a 196-amino-acid chain: Putative NADH dehydrogenase/NAD(P)H nitroreductase Smal_0358 (196 aa).

It belongs to the nitroreductase family. HadB/RutE subfamily. It depends on FMN as a cofactor.

In Stenotrophomonas maltophilia (strain R551-3), this protein is Putative NADH dehydrogenase/NAD(P)H nitroreductase Smal_0358.